The primary structure comprises 351 residues: Dihydroorotate dehydrogenase (quinone) (351 aa).

FMN-binding positions include 65 to 69 (AGLDK) and threonine 89. Substrate is bound at residue lysine 69. 114–118 (NRLGF) contacts substrate. Positions 150 and 183 each coordinate FMN. Asparagine 183 contacts substrate. Serine 186 serves as the catalytic Nucleophile. Asparagine 188 serves as a coordination point for substrate. Positions 228 and 256 each coordinate FMN. 257 to 258 (NT) lines the substrate pocket. FMN contacts are provided by residues glycine 279, glycine 308, and 329–330 (YT).

The protein belongs to the dihydroorotate dehydrogenase family. Type 2 subfamily. In terms of assembly, monomer. FMN is required as a cofactor.

The protein localises to the cell membrane. It carries out the reaction (S)-dihydroorotate + a quinone = orotate + a quinol. Its pathway is pyrimidine metabolism; UMP biosynthesis via de novo pathway; orotate from (S)-dihydroorotate (quinone route): step 1/1. In terms of biological role, catalyzes the conversion of dihydroorotate to orotate with quinone as electron acceptor. The polypeptide is Dihydroorotate dehydrogenase (quinone) (Acidovorax ebreus (strain TPSY) (Diaphorobacter sp. (strain TPSY))).